Reading from the N-terminus, the 314-residue chain is Probable manganese-dependent inorganic pyrophosphatase (314 aa).

The Mn(2+) site is built by H10, D14, D16, D80, H102, and D154.

It belongs to the PPase class C family. The cofactor is Mn(2+).

The protein localises to the cytoplasm. It carries out the reaction diphosphate + H2O = 2 phosphate + H(+). The chain is Probable manganese-dependent inorganic pyrophosphatase (ppaC) from Lactococcus lactis subsp. lactis (strain IL1403) (Streptococcus lactis).